The chain runs to 443 residues: Transcriptional adapter 2-alpha (443 aa).

S6 is subject to Phosphoserine. The ZZ-type zinc finger occupies S12–P69. C17, C20, C31, C34, C42, C45, H55, and H59 together coordinate Zn(2+). The SANT domain occupies V70–P122. Residues K132 and K138 each participate in a glycyl lysine isopeptide (Lys-Gly) (interchain with G-Cter in SUMO2) cross-link. The 88-residue stretch at N356–A443 folds into the SWIRM domain. The DNA-binding element occupies K426 to I435.

Interacts with GCN5. Interacts with NR3C1. Associated with the P/CAF protein in the PCAF complex. Component of the PCAF complex, at least composed of TADA2L/ADA2, TADA3L/ADA3, TAF5L/PAF65-beta, TAF6L/PAF65-alpha, TAF10/TAFII30, TAF12/TAFII20, TAF9/TAFII31 and TRRAP. Component of the ADA2A-containing complex (ATAC), composed of KAT14, KAT2A, TADA2L, TADA3L, ZZ3, MBIP, WDR5, YEATS2, CCDC101 and DR1. Interacts with CCDC134.

It localises to the nucleus. Its subcellular location is the chromosome. Functionally, component of the ATAC complex, a complex with histone acetyltransferase activity on histones H3 and H4. Required for the function of some acidic activation domains, which activate transcription from a distant site. Binds double-stranded DNA. Binds dinucleosomes, probably at the linker region between neighboring nucleosomes. Plays a role in chromatin remodeling. May promote TP53/p53 'Lys-321' acetylation, leading to reduced TP53 stability and transcriptional activity. May also promote XRCC6 acetylation thus facilitating cell apoptosis in response to DNA damage. The chain is Transcriptional adapter 2-alpha (Tada2a) from Mus musculus (Mouse).